We begin with the raw amino-acid sequence, 32 residues long: Calcitonin (32 aa).

Cysteine 1 and cysteine 7 form a disulfide bridge. Position 32 is a proline amide (proline 32).

Belongs to the calcitonin family.

Its subcellular location is the secreted. Calcitonin is a peptide hormone that causes a rapid but short-lived drop in the level of calcium and phosphate in blood by promoting the incorporation of those ions in the bones. Calcitonin function is mediated by the calcitonin receptor/CALCR and the CALCR-RAMP2 (AMYR2) receptor complex. The polypeptide is Calcitonin (CALCA) (Bos taurus (Bovine)).